A 690-amino-acid chain; its full sequence is Protein arginine N-methyltransferase 7 (690 aa).

SAM-dependent MTase PRMT-type domains are found at residues 14–357 (ENSW…YSLW) and 366–690 (AKSV…QKKP).

It belongs to the class I-like SAM-binding methyltransferase superfamily. Protein arginine N-methyltransferase family. PRMT7 subfamily.

Its function is as follows. Essential arginine methyltransferase that can both catalyze the formation of omega-N monomethylarginine (MMA) and symmetrical dimethylarginine (sDMA). Specifically mediates the symmetrical dimethylation of arginine residues in the small nuclear ribonucleoproteins SmD1 and SmD3. The sequence is that of Protein arginine N-methyltransferase 7 (Art7) from Drosophila ananassae (Fruit fly).